The primary structure comprises 248 residues: 2,3-bisphosphoglycerate-dependent phosphoglycerate mutase (248 aa).

Residues 8–15 (RHGESEWN), 21–22 (TG), arginine 60, 87–90 (ERHY), lysine 98, 114–115 (RR), and 183–184 (GN) contribute to the substrate site. The Tele-phosphohistidine intermediate role is filled by histidine 9. Glutamate 87 serves as the catalytic Proton donor/acceptor.

The protein belongs to the phosphoglycerate mutase family. BPG-dependent PGAM subfamily.

It carries out the reaction (2R)-2-phosphoglycerate = (2R)-3-phosphoglycerate. It participates in carbohydrate degradation; glycolysis; pyruvate from D-glyceraldehyde 3-phosphate: step 3/5. Catalyzes the interconversion of 2-phosphoglycerate and 3-phosphoglycerate. This Borrelia turicatae (strain 91E135) protein is 2,3-bisphosphoglycerate-dependent phosphoglycerate mutase.